Reading from the N-terminus, the 388-residue chain is Chorismate synthase (388 aa).

R39 and R45 together coordinate NADP(+). Residues 130–132, 251–252, G296, 311–315, and R337 each bind FMN; these read RSS, NA, and KPIPT.

The protein belongs to the chorismate synthase family. As to quaternary structure, homotetramer. The cofactor is FMNH2.

The catalysed reaction is 5-O-(1-carboxyvinyl)-3-phosphoshikimate = chorismate + phosphate. It functions in the pathway metabolic intermediate biosynthesis; chorismate biosynthesis; chorismate from D-erythrose 4-phosphate and phosphoenolpyruvate: step 7/7. Its function is as follows. Catalyzes the anti-1,4-elimination of the C-3 phosphate and the C-6 proR hydrogen from 5-enolpyruvylshikimate-3-phosphate (EPSP) to yield chorismate, which is the branch point compound that serves as the starting substrate for the three terminal pathways of aromatic amino acid biosynthesis. This reaction introduces a second double bond into the aromatic ring system. The protein is Chorismate synthase of Geobacillus sp. (strain WCH70).